Here is a 1249-residue protein sequence, read N- to C-terminus: Hyphally regulated cell wall protein 3 (1249 aa).

The first 20 residues, 1–20, serve as a signal peptide directing secretion; the sequence is MHLFKRIALTLWLIISSTLA. An N-linked (GlcNAc...) asparagine glycan is attached at asparagine 373. The segment covering 383 to 415 has biased composition (low complexity); that stretch reads FPTTSQSSSSETVASSSQPDSSSTEPSAFPSST. 2 disordered regions span residues 383–729 and 883–1217; these read FPTT…SGII and GLST…SSAS. The span at 416–428 shows a compositional bias: polar residues; it reads GDSSAEPSITSDY. Positions 429-716 are enriched in low complexity; that stretch reads SSSELSVVPS…SEYTATWTTT (288 aa). Residue asparagine 681 is glycosylated (N-linked (GlcNAc...) asparagine). 2 stretches are compositionally biased toward polar residues: residues 717-729 and 883-935; these read NSDGSVSTESGII and GLST…PVPT. Residues asparagine 891, asparagine 940, asparagine 944, asparagine 948, asparagine 952, asparagine 956, asparagine 960, asparagine 966, asparagine 970, asparagine 974, asparagine 984, asparagine 988, asparagine 992, asparagine 996, asparagine 1000, asparagine 1010, asparagine 1014, asparagine 1018, asparagine 1022, asparagine 1026, asparagine 1032, asparagine 1046, asparagine 1050, asparagine 1058, asparagine 1062, asparagine 1072, asparagine 1076, asparagine 1080, asparagine 1086, asparagine 1090, asparagine 1094, asparagine 1098, asparagine 1114, asparagine 1118, asparagine 1122, asparagine 1128, asparagine 1132, asparagine 1136, asparagine 1140, asparagine 1150, asparagine 1154, asparagine 1158, asparagine 1172, asparagine 1180, and asparagine 1186 are each glycosylated (N-linked (GlcNAc...) asparagine). Low complexity predominate over residues 941–959; it reads GSNNGSDNGSNNGSNNGSN. Residues 960–982 show a composition bias toward gly residues; the sequence is NGSGSGNGSNNGSNNGSGSGNGF. Residues 983 to 1043 are compositionally biased toward low complexity; the sequence is NNGSDNGSNN…SNSGSDSGNG (61 aa). Residues 1062 to 1078 are compositionally biased toward gly residues; the sequence is NGSGSGGESNNGSGNGS. A compositionally biased stretch (low complexity) spans 1079 to 1097; that stretch reads DNGSSPDNGSNNGSNNGSN. Positions 1139–1167 are enriched in low complexity; the sequence is NNGSNSGSNSDNGSNNSSGNGSSSDLGSV. Low complexity-rich tracts occupy residues 1175 to 1194 and 1205 to 1217; these read NEGSSNESGANNGSNNGAGA and SPSADSGSTSSAS. Residue asparagine 1225 is glycosylated (N-linked (GlcNAc...) asparagine). Asparagine 1225 carries the GPI-anchor amidated asparagine lipid modification. Positions 1226-1249 are cleaved as a propeptide — removed in mature form; the sequence is GSGKLLNGKVLTLSVLSSMVVVFL.

Belongs to the HYR1/IFF family. The GPI-anchor is attached to the protein in the endoplasmic reticulum and serves to target the protein to the cell surface. There, the glucosamine-inositol phospholipid moiety is cleaved off and the GPI-modified mannoprotein is covalently attached via its lipidless GPI glycan remnant to the 1,6-beta-glucan of the outer cell wall layer.

Its subcellular location is the secreted. The protein resides in the cell wall. The protein localises to the membrane. GPI-anchored cell wall protein involved in cell wall organization, hyphal growth, as well as in host-fungal interaction and virulence. The chain is Hyphally regulated cell wall protein 3 (HYR3) from Candida albicans (strain SC5314 / ATCC MYA-2876) (Yeast).